A 109-amino-acid polypeptide reads, in one-letter code: uncharacterized protein (109 aa).

The tract at residues 36–109 (NSSNNLNNNN…KKKKKKRRVK (74 aa)) is disordered. Low complexity predominate over residues 39-88 (NNLNNNNFNENNLKNNNNRNGNNNNNNNNNNNNNNNNNNNNNNNNNNNNN). Residues 99-109 (QKKKKKKRRVK) show a composition bias toward basic residues.

This is an uncharacterized protein from Dictyostelium discoideum (Social amoeba).